A 603-amino-acid chain; its full sequence is Conglutin beta 2 (603 aa).

The signal sequence occupies residues 1–30; it reads MANMRVKFPTLVLLLGIVFLMAVSIGIAYG. The segment covering 36 to 105 has biased composition (basic and acidic residues); the sequence is KNHERPQERE…REPSRGREQE (70 aa). 3 disordered regions span residues 36–177, 343–363, and 375–399; these read KNHE…RNPY, DGQEDEEQSRGQEQSHQDQGV, and LRKHAQSSSGKGKPSESGPFNLRSD. Residues 137–147 are compositionally biased toward low complexity; it reads QGSSSSSGRQS. Over residues 148–172 the composition is skewed to basic and acidic residues; sequence GYERREQREEREQQQEQDSRSESRR. The Cupin type-1 1 domain occupies 177-335; the sequence is YYFSYERFQT…TFNTRYEEIQ (159 aa). Low complexity predominate over residues 381–393; sequence SSSGKGKPSESGP. In terms of domain architecture, Cupin type-1 2 spans 394-554; it reads FNLRSDEPIY…TFPGSVEDVE (161 aa). Residue N504 is glycosylated (N-linked (GlcNAc...) asparagine). Positions 564-574 are enriched in low complexity; it reads YFANAQPQQQQ. Positions 564 to 583 are disordered; the sequence is YFANAQPQQQQQREKEGRRG.

Belongs to the 7S seed storage protein family. As to quaternary structure, component of globulins complexes which accumulate in seeds.

Its function is as follows. Seed storage protein. Accumulates during seed development and is hydrolyzed after germination to provide a carbon and nitrogen source for the developing seedling. The polypeptide is Conglutin beta 2 (Lupinus angustifolius (Narrow-leaved blue lupine)).